Here is a 198-residue protein sequence, read N- to C-terminus: Sorcin (198 aa).

EF-hand domains follow at residues 29 to 64 (GQTQDPLYGYFAAVAGQDGQIDADELQRCLTQSGIA), 70 to 103 (FNLETCRLMVSMLDRDMSGTMGFNEFKELWAVLN), 100 to 135 (AVLNGWRQHFISFDTDRSGTVDPQELQKALTTMGFR), and 134 to 169 (FRLSPQAVNSIAKRYSTNGKITFDDYIACCVKLRAL). Ca(2+)-binding residues include Asp-83, Asp-85, Ser-87, Thr-89, Glu-94, Asp-113, Asp-115, Ser-117, Thr-119, and Glu-124.

As to quaternary structure, homodimer. Interacts with GCA, RYR2 and ANXA7. Detected in cardiac myocytes.

The protein localises to the cytoplasm. It localises to the sarcoplasmic reticulum membrane. In terms of biological role, calcium-binding protein that modulates excitation-contraction coupling in the heart. Contributes to calcium homeostasis in the heart sarcoplasmic reticulum. Modulates the activity of RYR2 calcium channels. In Homo sapiens (Human), this protein is Sorcin (SRI).